The following is a 504-amino-acid chain: ATP synthase subunit alpha (504 aa).

170–177 (GDRQTGKT) lines the ATP pocket.

It belongs to the ATPase alpha/beta chains family. F-type ATPases have 2 components, CF(1) - the catalytic core - and CF(0) - the membrane proton channel. CF(1) has five subunits: alpha(3), beta(3), gamma(1), delta(1), epsilon(1). CF(0) has four main subunits: a(1), b(1), b'(1) and c(9-12).

The protein resides in the cellular thylakoid membrane. The enzyme catalyses ATP + H2O + 4 H(+)(in) = ADP + phosphate + 5 H(+)(out). Produces ATP from ADP in the presence of a proton gradient across the membrane. The alpha chain is a regulatory subunit. The chain is ATP synthase subunit alpha from Prochlorococcus marinus (strain NATL1A).